A 274-amino-acid chain; its full sequence is Large ribosomal subunit protein uL2 (274 aa).

2 disordered regions span residues 21-59 (KVGL…GGHK) and 224-274 (AMNP…QLKG). The segment covering 32 to 42 (SLTSGKKSSGG) has biased composition (low complexity). The span at 45–59 (NHGRITTRHRGGGHK) shows a compositional bias: basic residues. Over residues 263–274 (KSSDKYIKQLKG) the composition is skewed to basic and acidic residues.

Belongs to the universal ribosomal protein uL2 family. In terms of assembly, part of the 50S ribosomal subunit. Forms a bridge to the 30S subunit in the 70S ribosome.

In terms of biological role, one of the primary rRNA binding proteins. Required for association of the 30S and 50S subunits to form the 70S ribosome, for tRNA binding and peptide bond formation. It has been suggested to have peptidyltransferase activity; this is somewhat controversial. Makes several contacts with the 16S rRNA in the 70S ribosome. This chain is Large ribosomal subunit protein uL2, found in Wolbachia pipientis wMel.